We begin with the raw amino-acid sequence, 222 residues long: Ribosomal RNA small subunit methyltransferase G (222 aa).

S-adenosyl-L-methionine is bound by residues Gly85, Leu90, Asp108 to Thr110, Val136 to Glu137, and Arg150.

The protein belongs to the methyltransferase superfamily. RNA methyltransferase RsmG family.

It localises to the cytoplasm. In terms of biological role, specifically methylates the N7 position of a guanine in 16S rRNA. This chain is Ribosomal RNA small subunit methyltransferase G, found in Chlorobium phaeobacteroides (strain DSM 266 / SMG 266 / 2430).